The chain runs to 145 residues: 3-dehydroquinate dehydratase (145 aa).

Tyr-23 serves as the catalytic Proton acceptor. Substrate-binding residues include Asn-73, His-79, and Asp-86. His-99 acts as the Proton donor in catalysis. Residues 100 to 101 (LS) and Arg-110 each bind substrate.

Belongs to the type-II 3-dehydroquinase family. In terms of assembly, homododecamer.

The catalysed reaction is 3-dehydroquinate = 3-dehydroshikimate + H2O. Its pathway is metabolic intermediate biosynthesis; chorismate biosynthesis; chorismate from D-erythrose 4-phosphate and phosphoenolpyruvate: step 3/7. Its function is as follows. Catalyzes a trans-dehydration via an enolate intermediate. The sequence is that of 3-dehydroquinate dehydratase from Desulfitobacterium hafniense (strain Y51).